The sequence spans 485 residues: Aerolysin-5 (485 aa).

The N-terminal stretch at 1–23 (MQKLKITGLSLIISGLLMAQRHA) is a signal peptide. Cystine bridges form between C42/C98 and C182/C187. The segment at 68–84 (WQISGLANGWVIMGPVY) is interaction with host N-linked glycan. A part of the transmembrane beta-barrel after proteolytic activation of the toxin and insertion into the host membrane region spans residues 256 to 288 (YGLSEKVTTKNKFKWPLVGETELSIEIAANQSW). The interaction with glycans from host GPI-anchor stretch occupies residues 346 to 355 (RWGGNAWYTH). The propeptide occupies 446-485 (AADGKAPRALSARRGEQGLRLAIPLECRKSSPGLASATSA).

The protein belongs to the aerolysin family. As to quaternary structure, homodimer in solution; homoheptamer in the host membrane. After binding to GPI-anchored proteins in target membranes and proteolytic removal of the C-terminal propeptide, the protein assembles into a heptameric pre-pore complex. A further conformation change leads to insertion into the host membrane. In terms of processing, proteolytic cleavage and subsequent release of the propeptide trigger a major conformation change, leading to the formation of a heptameric pre-pore that then inserts into the host membrane.

The protein localises to the secreted. It is found in the host cell membrane. Its function is as follows. Secreted, cytolytic toxin that forms pores in host membranes after proteolytic removal of a C-terminal propeptide, leading to destruction of the membrane permeability barrier and cell death. The pores are formed by transmembrane beta-strands and are approximately 3 nm in diameter. The polypeptide is Aerolysin-5 (ahh5) (Aeromonas hydrophila).